The following is a 438-amino-acid chain: Histidine--tRNA ligase (438 aa).

Belongs to the class-II aminoacyl-tRNA synthetase family. As to quaternary structure, homodimer.

Its subcellular location is the cytoplasm. The catalysed reaction is tRNA(His) + L-histidine + ATP = L-histidyl-tRNA(His) + AMP + diphosphate + H(+). In Blochmanniella pennsylvanica (strain BPEN), this protein is Histidine--tRNA ligase.